The primary structure comprises 249 residues: DNA repair protein RecO (249 aa).

Belongs to the RecO family.

Its function is as follows. Involved in DNA repair and RecF pathway recombination. The chain is DNA repair protein RecO from Lactobacillus delbrueckii subsp. bulgaricus (strain ATCC 11842 / DSM 20081 / BCRC 10696 / JCM 1002 / NBRC 13953 / NCIMB 11778 / NCTC 12712 / WDCM 00102 / Lb 14).